A 596-amino-acid chain; its full sequence is Pescadillo homolog (596 aa).

A BRCT domain is found at 347-440 (PTSTLFSEFV…ELVPANLYLP (94 aa)). Residues 449–552 (SPWGDSVGYD…EEKDLKLIMM (104 aa)) are disordered. Residues 460–596 (AAELAEEEAE…TKAKLKKLEN (137 aa)) adopt a coiled-coil conformation. The span at 463-500 (LAEEEAESEEEEEVSDEAEGDEEATLAAEEDEEDEAEA) shows a compositional bias: acidic residues. Basic and acidic residues predominate over residues 501–510 (EELRAQKELE). Residues 519-529 (SEAADSAAPSK) show a composition bias toward low complexity.

The protein belongs to the pescadillo family. Component of the NOP7 complex, composed of ERB1, NOP7 and YTM1. The complex is held together by ERB1, which interacts with NOP7 via its N-terminal domain and with YTM1 via a high-affinity interaction between the seven-bladed beta-propeller domains of the 2 proteins. The NOP7 complex associates with the 66S pre-ribosome.

It is found in the nucleus. The protein localises to the nucleolus. It localises to the nucleoplasm. Its function is as follows. Component of the NOP7 complex, which is required for maturation of the 25S and 5.8S ribosomal RNAs and formation of the 60S ribosome. The protein is Pescadillo homolog of Eremothecium gossypii (strain ATCC 10895 / CBS 109.51 / FGSC 9923 / NRRL Y-1056) (Yeast).